The following is a 175-amino-acid chain: Nucleoside-triphosphatase THEP1 (175 aa).

ATP-binding positions include 8–15 and 99–106; these read GSPGVGKS and LVVIDEIG.

Belongs to the THEP1 NTPase family.

The enzyme catalyses a ribonucleoside 5'-triphosphate + H2O = a ribonucleoside 5'-diphosphate + phosphate + H(+). Functionally, has nucleotide phosphatase activity towards ATP, GTP, CTP, TTP and UTP. May hydrolyze nucleoside diphosphates with lower efficiency. The polypeptide is Nucleoside-triphosphatase THEP1 (Methanosarcina acetivorans (strain ATCC 35395 / DSM 2834 / JCM 12185 / C2A)).